A 446-amino-acid polypeptide reads, in one-letter code: tRNA-2-methylthio-N(6)-dimethylallyladenosine synthase (446 aa).

In terms of domain architecture, MTTase N-terminal spans lysine 3 to serine 120. Positions 12, 49, 83, 157, 161, and 164 each coordinate [4Fe-4S] cluster. Residues lysine 143 to arginine 375 form the Radical SAM core domain. The TRAM domain maps to aspartate 378–valine 444.

It belongs to the methylthiotransferase family. MiaB subfamily. Monomer. [4Fe-4S] cluster is required as a cofactor.

It localises to the cytoplasm. It carries out the reaction N(6)-dimethylallyladenosine(37) in tRNA + (sulfur carrier)-SH + AH2 + 2 S-adenosyl-L-methionine = 2-methylsulfanyl-N(6)-dimethylallyladenosine(37) in tRNA + (sulfur carrier)-H + 5'-deoxyadenosine + L-methionine + A + S-adenosyl-L-homocysteine + 2 H(+). Its function is as follows. Catalyzes the methylthiolation of N6-(dimethylallyl)adenosine (i(6)A), leading to the formation of 2-methylthio-N6-(dimethylallyl)adenosine (ms(2)i(6)A) at position 37 in tRNAs that read codons beginning with uridine. In Janthinobacterium sp. (strain Marseille) (Minibacterium massiliensis), this protein is tRNA-2-methylthio-N(6)-dimethylallyladenosine synthase.